We begin with the raw amino-acid sequence, 323 residues long: Ribokinase (323 aa).

Residues 26 to 28 (MTD), 54 to 58 (GKGAN), and E155 each bind substrate. Residues N200, 236 to 241 (TLGASG), and T257 each bind ATP. Residues D264 and T266 each coordinate K(+). Residues 269 to 270 (GD) and N296 contribute to the ATP site. Residue D270 coordinates substrate. D270 functions as the Proton acceptor in the catalytic mechanism. 4 residues coordinate K(+): S302, A305, G307, and S311.

The protein belongs to the carbohydrate kinase PfkB family. Ribokinase subfamily. In terms of assembly, homodimer. The cofactor is Mg(2+).

Its subcellular location is the cytoplasm. It localises to the nucleus. It catalyses the reaction D-ribose + ATP = D-ribose 5-phosphate + ADP + H(+). The protein operates within carbohydrate metabolism; D-ribose degradation; D-ribose 5-phosphate from beta-D-ribopyranose: step 2/2. With respect to regulation, activated by a monovalent cation that binds near, but not in, the active site. The most likely occupant of the site in vivo is potassium. Ion binding induces a conformational change that may alter substrate affinity. Competitively inhibited by phosphonoacetic acid, etidronate, 2-carboxethylphosphonic acid, N-(phosphonomethyl)glycine, N-(phosphonomethyl)iminodiacetic acid and clodronate. In terms of biological role, catalyzes the phosphorylation of ribose at O-5 in a reaction requiring ATP and magnesium. The resulting D-ribose-5-phosphate can then be used either for sythesis of nucleotides, histidine, and tryptophan, or as a component of the pentose phosphate pathway. The chain is Ribokinase from Mus musculus (Mouse).